The primary structure comprises 254 residues: Pimeloyl-[acyl-carrier protein] methyl ester esterase (254 aa).

An AB hydrolase-1 domain is found at 14 to 238; that stretch reads VVMLHGWGLH…QASHAPFLSH (225 aa). Residues Trp20, 80 to 81, and 142 to 146 contribute to the substrate site; these read SL and FLALQ. Catalysis depends on Ser80, which acts as the Nucleophile. Catalysis depends on residues Asp204 and His232. Position 232 (His232) interacts with substrate.

Belongs to the AB hydrolase superfamily. Carboxylesterase BioH family. As to quaternary structure, monomer.

Its subcellular location is the cytoplasm. It carries out the reaction 6-carboxyhexanoyl-[ACP] methyl ester + H2O = 6-carboxyhexanoyl-[ACP] + methanol + H(+). The protein operates within cofactor biosynthesis; biotin biosynthesis. Its function is as follows. The physiological role of BioH is to remove the methyl group introduced by BioC when the pimeloyl moiety is complete. It allows to synthesize pimeloyl-ACP via the fatty acid synthetic pathway through the hydrolysis of the ester bonds of pimeloyl-ACP esters. This chain is Pimeloyl-[acyl-carrier protein] methyl ester esterase, found in Chromobacterium violaceum (strain ATCC 12472 / DSM 30191 / JCM 1249 / CCUG 213 / NBRC 12614 / NCIMB 9131 / NCTC 9757 / MK).